The chain runs to 280 residues: Dexamethasone-induced Ras-related protein 1 (280 aa).

C11 carries the S-nitrosocysteine modification. Position 31–38 (31–38) interacts with GTP; sequence GSSKVGKT. The short motif at 53-61 is the Effector region element; sequence YTPTIEDFH. GTP contacts are provided by residues 78–82 and 145–148; these read DTSGN and NKGD. C277 is subject to Cysteine methyl ester. C277 carries S-farnesyl cysteine lipidation. The propeptide at 278-280 is removed in mature form; it reads VIS.

The protein belongs to the small GTPase superfamily. RasD family. In terms of assembly, component of a complex, at least composed of APBB1, RASD1/DEXRAS1 and APP. Interacts with APBB1/FE65. Forms a ternary complex with CAPON and NOS1. Post-translationally, S-nitrosylation stimulates guanine-nucleotide exchange activity. In terms of tissue distribution, expressed in brain, heart, kidney and liver.

The protein localises to the cell membrane. Its subcellular location is the cytoplasm. It localises to the perinuclear region. The protein resides in the nucleus. Its function is as follows. Small GTPase. Negatively regulates the transcription regulation activity of the APBB1/FE65-APP complex via its interaction with APBB1/FE65. In Mus musculus (Mouse), this protein is Dexamethasone-induced Ras-related protein 1 (Rasd1).